A 132-amino-acid polypeptide reads, in one-letter code: Small ribosomal subunit protein uS8 (132 aa).

It belongs to the universal ribosomal protein uS8 family. In terms of assembly, part of the 30S ribosomal subunit. Contacts proteins S5 and S12.

In terms of biological role, one of the primary rRNA binding proteins, it binds directly to 16S rRNA central domain where it helps coordinate assembly of the platform of the 30S subunit. In Bacillus pumilus (strain SAFR-032), this protein is Small ribosomal subunit protein uS8.